A 454-amino-acid polypeptide reads, in one-letter code: Nucleoprotein (454 aa).

Residues 1 to 62 (MSFVPGQENA…ATTQPNSGSV (62 aa)) are disordered. Low complexity predominate over residues 10-23 (AGGRSSSGNRAGNG). A compositionally biased stretch (polar residues) spans 50-61 (KQTATTQPNSGS). An RNA-binding region spans residues 56 to 197 (QPNSGSVVPH…GFYVEGSGRS (142 aa)). The region spanning 64-193 (PHYSWFSGIT…VLPQGFYVEG (130 aa)) is the CoV N NTD domain. 2 residues coordinate RNA: Arg109 and Arg125. Disordered regions lie at residues 160–179 (TRSD…PTRF), 186–230 (PQGF…STVK), 271–292 (PRQK…KRGP), and 382–428 (DGGA…RELT). At Ser162 the chain carries Phosphoserine; by host. Residue Arg167 coordinates RNA. Position 170 is a phosphoserine; by host (Ser170). Phosphothreonine; by host is present on Thr177. Positions 193–212 (GSGRSAPASRSGSRSQSRGP) are enriched in low complexity. The residue at position 194 (Ser194) is a Phosphoserine; by host. The segment covering 215–227 (RARSSSNQRQPAS) has biased composition (polar residues). One can recognise a CoV N CTD domain in the interval 260 to 383 (AKEVRQKILN…ENLNAYQKDG (124 aa)). Residues 267–383 (ILNKPRQKRT…ENLNAYQKDG (117 aa)) form a dimerization region. Residues Ser389 and Ser424 each carry the phosphoserine; by host modification. Thr428 is subject to Phosphothreonine; by host.

It belongs to the betacoronavirus nucleocapsid protein family. As to quaternary structure, homooligomer. Both monomeric and oligomeric forms interact with RNA. Interacts with protein M. Interacts with NSP3; this interaction serves to tether the genome to the newly translated replicase-transcriptase complex at a very early stage of infection. Post-translationally, ADP-ribosylated. The ADP-ribosylation is retained in the virion during infection. In terms of processing, phosphorylated on serine and threonine residues.

It is found in the virion. It localises to the host endoplasmic reticulum-Golgi intermediate compartment. The protein localises to the host Golgi apparatus. Major structural component of virions that associates with genomic RNA to form a long, flexible, helical nucleocapsid. Interaction with the M protein leads to the formation of virus particles. Binds to cellular membranes and phospholipids. Elicits cell-mediated immunity. May play roles in viral transcription and translation, and/or replication. Induces transcription of the prothrombinase (FGL2) and elevates procoagulant activity. Its function is as follows. Packages the positive strand viral genome RNA into a helical ribonucleocapsid (RNP) and plays a fundamental role during virion assembly through its interactions with the viral genome and membrane protein M. Plays an important role in enhancing the efficiency of subgenomic viral RNA transcription as well as viral replication. This Mus musculus (Mouse) protein is Nucleoprotein.